The chain runs to 257 residues: Phosphate import ATP-binding protein PstB (257 aa).

One can recognise an ABC transporter domain in the interval 11 to 252; the sequence is IQVRDLNFYY…PAKKQTEDYI (242 aa). 43 to 50 provides a ligand contact to ATP; it reads GPSGCGKS.

It belongs to the ABC transporter superfamily. Phosphate importer (TC 3.A.1.7) family. As to quaternary structure, the complex is composed of two ATP-binding proteins (PstB), two transmembrane proteins (PstC and PstA) and a solute-binding protein (PstS).

It localises to the cell inner membrane. The enzyme catalyses phosphate(out) + ATP + H2O = ADP + 2 phosphate(in) + H(+). In terms of biological role, part of the ABC transporter complex PstSACB involved in phosphate import. Responsible for energy coupling to the transport system. The sequence is that of Phosphate import ATP-binding protein PstB from Salmonella paratyphi A (strain ATCC 9150 / SARB42).